The chain runs to 183 residues: Orotate phosphoribosyltransferase (183 aa).

Residues Arg-100, Lys-101, Lys-104, His-106, and 126 to 134 (EDVVTTGSS) contribute to the 5-phospho-alpha-D-ribose 1-diphosphate site. Orotate-binding residues include Thr-130 and Arg-158.

Belongs to the purine/pyrimidine phosphoribosyltransferase family. PyrE subfamily. Homodimer. Requires Mg(2+) as cofactor.

It catalyses the reaction orotidine 5'-phosphate + diphosphate = orotate + 5-phospho-alpha-D-ribose 1-diphosphate. The protein operates within pyrimidine metabolism; UMP biosynthesis via de novo pathway; UMP from orotate: step 1/2. Functionally, catalyzes the transfer of a ribosyl phosphate group from 5-phosphoribose 1-diphosphate to orotate, leading to the formation of orotidine monophosphate (OMP). The chain is Orotate phosphoribosyltransferase from Aquifex aeolicus (strain VF5).